Reading from the N-terminus, the 291-residue chain is Lipoyl synthase 1 (291 aa).

7 residues coordinate [4Fe-4S] cluster: Cys-34, Cys-39, Cys-45, Cys-60, Cys-64, Cys-67, and Ser-274. The 218-residue stretch at 46–263 folds into the Radical SAM core domain; the sequence is FQAGTATFLI…QVYGEELGFL (218 aa).

It belongs to the radical SAM superfamily. Lipoyl synthase family. The cofactor is [4Fe-4S] cluster.

It localises to the cytoplasm. It catalyses the reaction [[Fe-S] cluster scaffold protein carrying a second [4Fe-4S](2+) cluster] + N(6)-octanoyl-L-lysyl-[protein] + 2 oxidized [2Fe-2S]-[ferredoxin] + 2 S-adenosyl-L-methionine + 4 H(+) = [[Fe-S] cluster scaffold protein] + N(6)-[(R)-dihydrolipoyl]-L-lysyl-[protein] + 4 Fe(3+) + 2 hydrogen sulfide + 2 5'-deoxyadenosine + 2 L-methionine + 2 reduced [2Fe-2S]-[ferredoxin]. Its pathway is protein modification; protein lipoylation via endogenous pathway; protein N(6)-(lipoyl)lysine from octanoyl-[acyl-carrier-protein]: step 2/2. Functionally, catalyzes the radical-mediated insertion of two sulfur atoms into the C-6 and C-8 positions of the octanoyl moiety bound to the lipoyl domains of lipoate-dependent enzymes, thereby converting the octanoylated domains into lipoylated derivatives. This Nostoc sp. (strain PCC 7120 / SAG 25.82 / UTEX 2576) protein is Lipoyl synthase 1.